The following is an 858-amino-acid chain: GDP-fucose protein O-fucosyltransferase 2 (858 aa).

Topologically, residues Met-1 to Arg-150 are cytoplasmic. Residues Leu-151–Ala-171 form a helical; Signal-anchor for type II membrane protein membrane-spanning segment. The Lumenal portion of the chain corresponds to Thr-172 to Leu-858. Gly-237–His-241 is a GDP-beta-L-fucose binding site. Glu-238 (proton acceptor) is an active-site residue. Positions Ala-448–Glu-510 are disordered. The span at Asp-486–Glu-510 shows a compositional bias: basic and acidic residues. GDP-beta-L-fucose is bound by residues His-646–Arg-648 and Arg-787–Phe-788. The disordered stretch occupies residues Thr-819–Leu-858. A compositionally biased stretch (basic and acidic residues) spans Lys-831–Arg-846.

This sequence belongs to the glycosyltransferase 68 family.

It localises to the endoplasmic reticulum membrane. The catalysed reaction is L-seryl-[protein] + GDP-beta-L-fucose = 3-O-(alpha-L-fucosyl)-L-seryl-[protein] + GDP + H(+). The enzyme catalyses L-threonyl-[protein] + GDP-beta-L-fucose = 3-O-(alpha-L-fucosyl)-L-threonyl-[protein] + GDP + H(+). The protein operates within protein modification; protein glycosylation. Its function is as follows. Catalyzes the reaction that attaches fucose through an O-glycosidic linkage to a conserved serine or threonine residue in the consensus sequence C1-X-X-S/T-C2 of thrombospondin type I repeats (TSRs) where C1 and C2 are the first and second cysteines of the repeat, respectively. O-fucosylates microneme protein MIC2 and may play a role in its stabilization. Probably by regulating protein O-fucosylation, may play a role in tachyzoite adhesion to and/or invasion of host cells; however, POFUT2 involvement in adhesion/invasion is controversial. This Toxoplasma gondii (strain ATCC 50853 / GT1) protein is GDP-fucose protein O-fucosyltransferase 2.